A 93-amino-acid polypeptide reads, in one-letter code: Secretoglobin family 3A member 2 (93 aa).

Positions 1-21 are cleaved as a signal peptide; that stretch reads MKLVTIFLLVTISLCSYSATA.

The protein belongs to the secretoglobin family. UGRP subfamily. Homodimer; disulfide-linked. Monomer. Interacts with APOA1. Highly expressed in lung and trachea. Detected throughout the airway epithelium in lung, with slightly higher expression in large airways. Found in lung submucosal gland acinus where it localizes to serous-like cells. Probably expressed in club cells of the bronchioles. Not detected in other tissues tested.

The protein resides in the secreted. In terms of biological role, secreted cytokine-like protein. Binds to the scavenger receptor MARCO. Can also bind to pathogens including the Gram-positive bacterium L.monocytogenes, the Gram-negative bacterium P.aeruginosa, and yeast. Strongly inhibits phospholipase A2 (PLA2G1B) activity. Seems to have anti-inflammatory effects in respiratory epithelium. Also has anti-fibrotic activity in lung. May play a role in fetal lung development and maturation. Promotes branching morphogenesis during early stages of lung development. In the pituitary, may inhibit production of follicle-stimulating hormone (FSH) and luteinizing hormone (LH). The polypeptide is Secretoglobin family 3A member 2 (SCGB3A2) (Homo sapiens (Human)).